Reading from the N-terminus, the 172-residue chain is Co-chaperone protein HscB homolog (172 aa).

The region spanning 2–74 is the J domain; sequence NYFELFGLVE…LRRAEYLLSL (73 aa).

The protein belongs to the HscB family. In terms of assembly, interacts with HscA and stimulates its ATPase activity.

Functionally, co-chaperone involved in the maturation of iron-sulfur cluster-containing proteins. Seems to help targeting proteins to be folded toward HscA. The polypeptide is Co-chaperone protein HscB homolog (Aeromonas hydrophila subsp. hydrophila (strain ATCC 7966 / DSM 30187 / BCRC 13018 / CCUG 14551 / JCM 1027 / KCTC 2358 / NCIMB 9240 / NCTC 8049)).